Here is a 403-residue protein sequence, read N- to C-terminus: Probable eukaryotic initiation factor 4A (403 aa).

A disordered region spans residues 1 to 29; sequence MAQNDKIAPQDQDSFLDDQPGVRPIPSFD. Positions 26-54 match the Q motif motif; sequence PSFDDMPLHQNLLRGIYSYGFEKPSSIQQ. Residues 57–230 enclose the Helicase ATP-binding domain; that stretch reads IAPFTRGGDI…KKFMRDPVRI (174 aa). Residue 70–77 participates in ATP binding; sequence AQSGTGKT. Positions 178 to 181 match the DEAD box motif; that stretch reads DEAD. The region spanning 241-401 is the Helicase C-terminal domain; it reads GIKQFFIAVE…ELPVDFAAYL (161 aa).

It belongs to the DEAD box helicase family. eIF4A subfamily. As to quaternary structure, eIF4F is a multi-subunit complex, the composition of which varies with external and internal environmental conditions. It is composed of at least EIF4A, EIF4E and EIF4G.

The catalysed reaction is ATP + H2O = ADP + phosphate + H(+). Functionally, ATP-dependent RNA helicase which is a subunit of the eIF4F complex involved in cap recognition and is required for mRNA binding to ribosome. In the current model of translation initiation, eIF4A unwinds RNA secondary structures in the 5'-UTR of mRNAs which is necessary to allow efficient binding of the small ribosomal subunit, and subsequent scanning for the initiator codon. In Leishmania infantum, this protein is Probable eukaryotic initiation factor 4A.